Here is a 21-residue protein sequence, read N- to C-terminus: Neuropeptide gamma (21 aa).

The tract at residues 1 to 21 (SSANPQITRKRHKINSFVGLM) is disordered. Methionine 21 carries the methionine amide modification.

It belongs to the tachykinin family.

The protein resides in the secreted. In terms of biological role, tachykinins are active peptides which excite neurons, evoke behavioral responses, and contract (directly or indirectly) many smooth muscles. Is a potent vasoconstrictor and secretagogue that plays a regulatory role in the central control of ventilation, in particular, the heart rate variability (HRV). This Oncorhynchus mykiss (Rainbow trout) protein is Neuropeptide gamma.